The primary structure comprises 1208 residues: Putative protease AXL1 (1208 aa).

His-68 lines the Zn(2+) pocket. Glu-71 (proton acceptor) is an active-site residue. Positions 72 and 156 each coordinate Zn(2+). At Ser-262 the chain carries Phosphoserine.

Belongs to the peptidase M16 family. In terms of assembly, interacts with BUD5. Zn(2+) serves as cofactor.

The protein resides in the bud neck. Its function is as follows. Probable protease. Involved in axial budding. This is Putative protease AXL1 (AXL1) from Saccharomyces cerevisiae (strain ATCC 204508 / S288c) (Baker's yeast).